The sequence spans 324 residues: NADH-ubiquinone oxidoreductase chain 1 (324 aa).

8 consecutive transmembrane segments (helical) span residues 5 to 25 (ILLY…ATAF), 75 to 95 (FLFL…WMPL), 106 to 126 (LGLL…LGSG), 146 to 166 (ISYE…TGGF), 177 to 197 (TVWL…STLA), 228 to 248 (LFFL…VILF), 259 to 279 (QIST…FLWI), and 299 to 319 (FLPL…ATAS).

This sequence belongs to the complex I subunit 1 family.

It is found in the mitochondrion inner membrane. It catalyses the reaction a ubiquinone + NADH + 5 H(+)(in) = a ubiquinol + NAD(+) + 4 H(+)(out). Core subunit of the mitochondrial membrane respiratory chain NADH dehydrogenase (Complex I) that is believed to belong to the minimal assembly required for catalysis. Complex I functions in the transfer of electrons from NADH to the respiratory chain. The immediate electron acceptor for the enzyme is believed to be ubiquinone. This chain is NADH-ubiquinone oxidoreductase chain 1 (MT-ND1), found in Squalus acanthias (Spiny dogfish).